A 206-amino-acid chain; its full sequence is Adenylate kinase (206 aa).

The disordered stretch occupies residues M1 to S21. Position 13 to 18 (G13 to T18) interacts with ATP. The interval T33 to V61 is NMP. AMP-binding positions include T34, R39, E59–V61, G84–R87, and Q91. Residues G120 to D153 are LID. ATP-binding positions include R121 and I130–Y131. AMP is bound by residues R150 and R161. A189 contributes to the ATP binding site.

This sequence belongs to the adenylate kinase family. Monomer.

The protein localises to the cytoplasm. The enzyme catalyses AMP + ATP = 2 ADP. The protein operates within purine metabolism; AMP biosynthesis via salvage pathway; AMP from ADP: step 1/1. Catalyzes the reversible transfer of the terminal phosphate group between ATP and AMP. Plays an important role in cellular energy homeostasis and in adenine nucleotide metabolism. This is Adenylate kinase from Natronomonas pharaonis (strain ATCC 35678 / DSM 2160 / CIP 103997 / JCM 8858 / NBRC 14720 / NCIMB 2260 / Gabara) (Halobacterium pharaonis).